The primary structure comprises 424 residues: Glutamyl-tRNA reductase (424 aa).

Residues 51 to 54 (TCNR), Ser-99, 104 to 106 (EDQ), and Gln-110 contribute to the substrate site. Cys-52 acts as the Nucleophile in catalysis. 179 to 184 (GTGEMG) serves as a coordination point for NADP(+).

The protein belongs to the glutamyl-tRNA reductase family. In terms of assembly, homodimer.

The catalysed reaction is (S)-4-amino-5-oxopentanoate + tRNA(Glu) + NADP(+) = L-glutamyl-tRNA(Glu) + NADPH + H(+). It functions in the pathway porphyrin-containing compound metabolism; protoporphyrin-IX biosynthesis; 5-aminolevulinate from L-glutamyl-tRNA(Glu): step 1/2. Its function is as follows. Catalyzes the NADPH-dependent reduction of glutamyl-tRNA(Glu) to glutamate 1-semialdehyde (GSA). The sequence is that of Glutamyl-tRNA reductase from Methanospirillum hungatei JF-1 (strain ATCC 27890 / DSM 864 / NBRC 100397 / JF-1).